A 331-amino-acid polypeptide reads, in one-letter code: MLVFMSDDLAGFSRQTTVPDGAAGRRFDAVLAELFPEFSRSRLTEWIKSGDVLLNGVLVRPRDPVYGGEVVWLQVMPDIRTDAVPQDIPLDILYEDEHVFVINKPAGLVVHPGAGNPDGTLVNALLHRDPALAAVPRAGVVHRLDKDTSGVMVVARTLQAQTALVEQLSSRQVHRQYLAVVVSALVSGGTVNAAIERHPRDRLRMEVSDTGKEAVTHYRLRERFRAHTALECRLDTGRTHQIRVHMAHLRHPIVGDRLYGGSLKLPKGGTDALVAMLRGFKRQALHAEVLEFLHPVRALPVRIVAPVPEDLCQLLAALREDSALFFEREWR.

The S4 RNA-binding domain maps to 25–97 (RRFDAVLAEL…IPLDILYEDE (73 aa)). Residue D145 is part of the active site.

The protein belongs to the pseudouridine synthase RluA family.

It is found in the cytoplasm. The catalysed reaction is uridine(1911/1915/1917) in 23S rRNA = pseudouridine(1911/1915/1917) in 23S rRNA. In terms of biological role, responsible for synthesis of pseudouridine from uracil at positions 1911, 1915 and 1917 in 23S ribosomal RNA. The protein is Ribosomal large subunit pseudouridine synthase D (rluD) of Xylella fastidiosa (strain Temecula1 / ATCC 700964).